The sequence spans 232 residues: 5'-methylthioadenosine/S-adenosylhomocysteine nucleosidase (232 aa).

Glu12 serves as the catalytic Proton acceptor. Residues Gly78, Ile152, and 173–174 contribute to the substrate site; that span reads ME. Residue Asp197 is the Proton donor of the active site.

Belongs to the PNP/UDP phosphorylase family. MtnN subfamily. As to quaternary structure, homodimer.

It catalyses the reaction S-adenosyl-L-homocysteine + H2O = S-(5-deoxy-D-ribos-5-yl)-L-homocysteine + adenine. The enzyme catalyses S-methyl-5'-thioadenosine + H2O = 5-(methylsulfanyl)-D-ribose + adenine. The catalysed reaction is 5'-deoxyadenosine + H2O = 5-deoxy-D-ribose + adenine. Its pathway is amino-acid biosynthesis; L-methionine biosynthesis via salvage pathway; S-methyl-5-thio-alpha-D-ribose 1-phosphate from S-methyl-5'-thioadenosine (hydrolase route): step 1/2. Catalyzes the irreversible cleavage of the glycosidic bond in both 5'-methylthioadenosine (MTA) and S-adenosylhomocysteine (SAH/AdoHcy) to adenine and the corresponding thioribose, 5'-methylthioribose and S-ribosylhomocysteine, respectively. Also cleaves 5'-deoxyadenosine, a toxic by-product of radical S-adenosylmethionine (SAM) enzymes, into 5-deoxyribose and adenine. Thus, is required for in vivo function of the radical SAM enzymes biotin synthase and lipoic acid synthase, that are inhibited by 5'-deoxyadenosine accumulation. The polypeptide is 5'-methylthioadenosine/S-adenosylhomocysteine nucleosidase (Enterobacter sp. (strain 638)).